A 546-amino-acid chain; its full sequence is Nicotinic acid-CoA ligase olcI (546 aa).

Position 194–205 (M194–K205) interacts with AMP. The interval E445 to K523 is AMP-binding.

Belongs to the ATP-dependent AMP-binding enzyme family.

The enzyme catalyses nicotinate + ATP + CoA = nicotinyl-CoA + AMP + diphosphate. The protein operates within secondary metabolite biosynthesis; terpenoid biosynthesis. In terms of biological role, nicotinic acid-CoA ligase; part of the gene cluster that mediates the biosynthesis of 15-deoxyoxalicine B. The first step of the pathway is the synthesis of nicotinyl-CoA from nicotinic acid by the nicotinic acid-CoA ligase olcI. Nicotinyl-CoA is then a substrate of polyketide synthase olcA to produce 4-hydroxy-6-(3-pyridinyl)-2H-pyran-2-one (HPPO) which is further prenylated by the polyprenyl transferase olcH to yield geranylgeranyl-HPPO. Geranylgeranyl pyrophosphate is provided by the cluster-specific geranylgeranyl pyrophosphate synthase olcC. The FAD-dependent monooxygenase olcE catalyzes the epoxidation of geranylgeranyl-HPPO and the terpene cyclase olcD catalyzes the cyclization of the terpenoid component, resulting in the formation of the tricyclic terpene moiety seen in predecaturin E. The cytochrome P450 monooxygenase then catalyzes the allylic oxidation of predecaturin E, which is followed by spirocylization with concomitant loss of one molecule of water to form decaturin E. Decaturin E is the substrate of the cytochrome P450 monooxygenase olcJ which hydroxylates it at the C-29 position to form decaturin F. The short-chain dehydrogenase/reductase olcF may catalyze the oxidation of decaturin F to generate the 29-hydroxyl-27-one intermediate, and subsequent hemiacetal formation probably leads to the formation of decaturin C. The dioxygenase olcK may be a peroxisomal enzyme that catalyzes the hydroxylation of decaturin C into decaturin A once decaturin C is shuttled into the peroxisome by the MFS transporter olcL. Finally the cytochrome P450 monooxygenase olcB catalyzes the oxidative rearrangement to yield 15-deoxyoxalicine B. In the absence of olcJ, decaturin E may be shunted to a pathway in which it is oxidized to a ketone, possibly by olcF, to form decaturin D, which undergoes further allylic oxidation to yield decaturin G. Moreover, in the absence of oclK or oclL, oclB can convert decaturin C into 15-deoxyoxalicine A. This Penicillium canescens protein is Nicotinic acid-CoA ligase olcI.